Consider the following 182-residue polypeptide: Troponin I, fast skeletal muscle (182 aa).

Position 2 is an N-acetylglycine (Gly-2). The interval 2–48 (GDEEKRNRAITARRQHLKSVMLQIAATELEKEESRRESEKENYLSEH) is involved in binding TNC. A Phosphothreonine modification is found at Thr-12. Residues 29–45 (ELEKEESRRESEKENYL) are compositionally biased toward basic and acidic residues. A disordered region spans residues 29–53 (ELEKEESRRESEKENYLSEHCPPLH). Residues 97–117 (NQKLFDLRGKFKRPPLRRVRM) form an involved in binding TNC and actin region. Ser-118 is modified (phosphoserine).

Belongs to the troponin I family. Binds to actin and tropomyosin.

Troponin I is the inhibitory subunit of troponin, the thin filament regulatory complex which confers calcium-sensitivity to striated muscle actomyosin ATPase activity. The sequence is that of Troponin I, fast skeletal muscle (Tnni2) from Mus musculus (Mouse).